Here is a 450-residue protein sequence, read N- to C-terminus: Glucose-6-phosphate isomerase (450 aa).

Glutamate 290 (proton donor) is an active-site residue. Residues histidine 311 and lysine 425 contribute to the active site.

The protein belongs to the GPI family.

It localises to the cytoplasm. The enzyme catalyses alpha-D-glucose 6-phosphate = beta-D-fructose 6-phosphate. The protein operates within carbohydrate biosynthesis; gluconeogenesis. It functions in the pathway carbohydrate degradation; glycolysis; D-glyceraldehyde 3-phosphate and glycerone phosphate from D-glucose: step 2/4. In terms of biological role, catalyzes the reversible isomerization of glucose-6-phosphate to fructose-6-phosphate. The protein is Glucose-6-phosphate isomerase of Lactiplantibacillus plantarum (strain ATCC BAA-793 / NCIMB 8826 / WCFS1) (Lactobacillus plantarum).